A 218-amino-acid polypeptide reads, in one-letter code: Large ribosomal subunit protein uL3 (218 aa).

The disordered stretch occupies residues 126–163 (HGFSRGPMTHGSKNHRQPGSIGAGTTPGRIYPGKRMSG).

The protein belongs to the universal ribosomal protein uL3 family. In terms of assembly, part of the 50S ribosomal subunit. Forms a cluster with proteins L14 and L19.

Its function is as follows. One of the primary rRNA binding proteins, it binds directly near the 3'-end of the 23S rRNA, where it nucleates assembly of the 50S subunit. The chain is Large ribosomal subunit protein uL3 from Synechococcus sp. (strain CC9311).